The sequence spans 335 residues: Trans-1,2-dihydrobenzene-1,2-diol dehydrogenase (335 aa).

This sequence belongs to the Gfo/Idh/MocA family. As to quaternary structure, homodimer. Liver, lens, spleen, kidney and small intestine.

The catalysed reaction is (1R,2R)-1,2-dihydrobenzene-1,2-diol + NADP(+) = catechol + NADPH + H(+). It catalyses the reaction D-xylose + NADP(+) = D-xylono-1,5-lactone + NADPH + H(+). Strongly inhibited by isoascorbic acid, 4-hydroxyacetophenone and chloromercuriphenylsulphonate. Stimulated by various salts. In Sus scrofa (Pig), this protein is Trans-1,2-dihydrobenzene-1,2-diol dehydrogenase (DHDH).